The chain runs to 225 residues: Uracil-DNA glycosylase (225 aa).

The active-site Proton acceptor is aspartate 65.

It belongs to the uracil-DNA glycosylase (UDG) superfamily. UNG family.

The protein localises to the cytoplasm. The catalysed reaction is Hydrolyzes single-stranded DNA or mismatched double-stranded DNA and polynucleotides, releasing free uracil.. Excises uracil residues from the DNA which can arise as a result of misincorporation of dUMP residues by DNA polymerase or due to deamination of cytosine. The protein is Uracil-DNA glycosylase of Bacillus anthracis (strain A0248).